The chain runs to 165 residues: MSFASAPTVPTNTSHYADLPAASSALFQAKARRGLTFDQIAKAIGKDEVWLAAAFYGQARFTEDELITVGEVLGIGSSELVSQLGSHWWPNRGLGPMPPTDPVIYRLYESVLVYGHAIKAVIHEKFGDGIMSMIDCKINVERKEDPKGDRVLLTFDGKFLPYARW.

Residues Arg106, Glu109, and Ser132 contribute to the active site.

This sequence belongs to the cyanase family.

It catalyses the reaction cyanate + hydrogencarbonate + 3 H(+) = NH4(+) + 2 CO2. Catalyzes the reaction of cyanate with bicarbonate to produce ammonia and carbon dioxide. The sequence is that of Cyanate hydratase from Laccaria bicolor (strain S238N-H82 / ATCC MYA-4686) (Bicoloured deceiver).